Here is a 264-residue protein sequence, read N- to C-terminus: Acyl-[acyl-carrier-protein]--UDP-N-acetylglucosamine O-acyltransferase (264 aa).

The protein belongs to the transferase hexapeptide repeat family. LpxA subfamily. Homotrimer.

It localises to the cytoplasm. The catalysed reaction is a (3R)-hydroxyacyl-[ACP] + UDP-N-acetyl-alpha-D-glucosamine = a UDP-3-O-[(3R)-3-hydroxyacyl]-N-acetyl-alpha-D-glucosamine + holo-[ACP]. The protein operates within glycolipid biosynthesis; lipid IV(A) biosynthesis; lipid IV(A) from (3R)-3-hydroxytetradecanoyl-[acyl-carrier-protein] and UDP-N-acetyl-alpha-D-glucosamine: step 1/6. Involved in the biosynthesis of lipid A, a phosphorylated glycolipid that anchors the lipopolysaccharide to the outer membrane of the cell. The sequence is that of Acyl-[acyl-carrier-protein]--UDP-N-acetylglucosamine O-acyltransferase from Chlorobaculum tepidum (strain ATCC 49652 / DSM 12025 / NBRC 103806 / TLS) (Chlorobium tepidum).